The primary structure comprises 273 residues: Phosphate import ATP-binding protein PstB (273 aa).

The region spanning 17 to 259 (LSAENLSIFY…DKTNNIFQNP (243 aa)) is the ABC transporter domain. 49 to 56 (GPSGCGKS) serves as a coordination point for ATP.

This sequence belongs to the ABC transporter superfamily. Phosphate importer (TC 3.A.1.7) family. As to quaternary structure, the complex is composed of two ATP-binding proteins (PstB), two transmembrane proteins (PstC and PstA) and a solute-binding protein (PstS).

The protein resides in the cell inner membrane. It catalyses the reaction phosphate(out) + ATP + H2O = ADP + 2 phosphate(in) + H(+). Functionally, part of the ABC transporter complex PstSACB involved in phosphate import. Responsible for energy coupling to the transport system. The sequence is that of Phosphate import ATP-binding protein PstB from Trichodesmium erythraeum (strain IMS101).